Here is a 182-residue protein sequence, read N- to C-terminus: ATP-dependent protease subunit HslV (182 aa).

Residue Thr-7 is part of the active site. 3 residues coordinate Na(+): Gly-162, Cys-165, and Thr-168.

This sequence belongs to the peptidase T1B family. HslV subfamily. As to quaternary structure, a double ring-shaped homohexamer of HslV is capped on each side by a ring-shaped HslU homohexamer. The assembly of the HslU/HslV complex is dependent on binding of ATP.

It localises to the cytoplasm. The enzyme catalyses ATP-dependent cleavage of peptide bonds with broad specificity.. With respect to regulation, allosterically activated by HslU binding. Its function is as follows. Protease subunit of a proteasome-like degradation complex believed to be a general protein degrading machinery. The chain is ATP-dependent protease subunit HslV from Legionella pneumophila subsp. pneumophila (strain Philadelphia 1 / ATCC 33152 / DSM 7513).